The chain runs to 448 residues: Bifunctional protein GlmU (448 aa).

The pyrophosphorylase stretch occupies residues M1–L229. UDP-N-acetyl-alpha-D-glucosamine-binding positions include L11–G14, K25, Q76, G81–T82, Y103–D105, G140, E154, N169, and N227. A Mg(2+)-binding site is contributed by D105. N227 contributes to the Mg(2+) binding site. The interval L230 to S250 is linker. The tract at residues G251–L448 is N-acetyltransferase. Residue K351 coordinates UDP-N-acetyl-alpha-D-glucosamine. The active-site Proton acceptor is H363. Y366 and N377 together coordinate UDP-N-acetyl-alpha-D-glucosamine. Residues A380, N386 to Y387, S405, and A423 contribute to the acetyl-CoA site.

In the N-terminal section; belongs to the N-acetylglucosamine-1-phosphate uridyltransferase family. The protein in the C-terminal section; belongs to the transferase hexapeptide repeat family. Homotrimer. Mg(2+) serves as cofactor.

It is found in the cytoplasm. It catalyses the reaction alpha-D-glucosamine 1-phosphate + acetyl-CoA = N-acetyl-alpha-D-glucosamine 1-phosphate + CoA + H(+). It carries out the reaction N-acetyl-alpha-D-glucosamine 1-phosphate + UTP + H(+) = UDP-N-acetyl-alpha-D-glucosamine + diphosphate. It functions in the pathway nucleotide-sugar biosynthesis; UDP-N-acetyl-alpha-D-glucosamine biosynthesis; N-acetyl-alpha-D-glucosamine 1-phosphate from alpha-D-glucosamine 6-phosphate (route II): step 2/2. Its pathway is nucleotide-sugar biosynthesis; UDP-N-acetyl-alpha-D-glucosamine biosynthesis; UDP-N-acetyl-alpha-D-glucosamine from N-acetyl-alpha-D-glucosamine 1-phosphate: step 1/1. The protein operates within bacterial outer membrane biogenesis; LPS lipid A biosynthesis. Functionally, catalyzes the last two sequential reactions in the de novo biosynthetic pathway for UDP-N-acetylglucosamine (UDP-GlcNAc). The C-terminal domain catalyzes the transfer of acetyl group from acetyl coenzyme A to glucosamine-1-phosphate (GlcN-1-P) to produce N-acetylglucosamine-1-phosphate (GlcNAc-1-P), which is converted into UDP-GlcNAc by the transfer of uridine 5-monophosphate (from uridine 5-triphosphate), a reaction catalyzed by the N-terminal domain. The chain is Bifunctional protein GlmU from Buchnera aphidicola subsp. Baizongia pistaciae (strain Bp).